Consider the following 22-residue polypeptide: Cytin chain B (22 aa).

This sequence belongs to the protease inhibitor I13 (potato type I serine protease inhibitor) family. Heterodimer of an A chain and a B chain, linked by a disulfide bond.

In terms of biological role, inhibitor of chymotrypsin. The sequence is that of Cytin chain B from Theromyzon tessulatum (Duck leech).